The sequence spans 266 residues: Hemin import ATP-binding protein HmuV (266 aa).

The 237-residue stretch at 12-248 (LEASHLHYHV…ETLTQWYQAD (237 aa)) folds into the ABC transporter domain. 44–51 (GPNGAGKS) contributes to the ATP binding site.

It belongs to the ABC transporter superfamily. Heme (hemin) importer (TC 3.A.1.14.5) family. As to quaternary structure, the complex is composed of two ATP-binding proteins (HmuV), two transmembrane proteins (HmuU) and a solute-binding protein (HmuT).

The protein resides in the cell inner membrane. Functionally, part of the ABC transporter complex HmuTUV involved in hemin import. Responsible for energy coupling to the transport system. In Yersinia pestis bv. Antiqua (strain Antiqua), this protein is Hemin import ATP-binding protein HmuV.